We begin with the raw amino-acid sequence, 349 residues long: Dehydrogenase FPY6 (349 aa).

It belongs to the Gfo/Idh/MocA family.

Its pathway is secondary metabolite biosynthesis. Functionally, dehydrogenase; part of the gene cluster that mediates the biosynthesis of the gamma-pyrones fusapyrone (FPY) and deoxyfusapyrone (dFPY). FPY is an undecaketide and thus likely synthesized by the polyketide synthase FPY1 from acetyl-CoA functioning as starter unit and the addition of 10 malonyl-CoA extender units by successive Claisen-condensations. Next to this, FPY shares some rare features: C-glycosylated 4-deoxyglucose at C-3, a gem-dimethyl group at C-13, and an alpha-beta to beta-gamma double bond shift at C-20. During FPY biosynthesis mono-C-methyl groups are transferred to the tetra-, penta-, hexa- and heptaketide, while two C-methyl groups are transferred to the nonaketide, suggesting that the CMet domain is programmed to selectively catalyze two successive C-alpha-methylation reactions of the nonaketide, while other alpha-carbons are non- or mono-methylated only. While the origin of the 4'-deoxyglucose moiety remains opaque, its transfer to C-3 is most likely mediated by the C-glycosyltransferase FPY2. Next to this, the hydroxyl group present at C-33 and discriminating between FPY and dFPY, is likely to be installed by the cytochrome P450 monooxygenase FPY7. No putative function can be predicted for the remaining genes FPY3-FPY6. This Fusarium mangiferae (Mango malformation disease fungus) protein is Dehydrogenase FPY6.